A 40-amino-acid chain; its full sequence is Dolichyl-diphosphooligosaccharide--protein glycosyltransferase subunit 4 (40 aa).

Residues 1-4 (MITD) are Lumenal-facing. A helical transmembrane segment spans residues 5-25 (VQLAIFSNVLGVFLFLLVVAY). Residues 26–40 (HYINANTGKPIPKAK) are Cytoplasmic-facing.

The protein belongs to the OST4 family. As to quaternary structure, component of the oligosaccharyltransferase (OST) complex.

The protein resides in the endoplasmic reticulum membrane. Its function is as follows. Subunit of the oligosaccharyl transferase (OST) complex that catalyzes the initial transfer of a defined glycan (Glc(3)Man(9)GlcNAc(2) in eukaryotes) from the lipid carrier dolichol-pyrophosphate to an asparagine residue within an Asn-X-Ser/Thr consensus motif in nascent polypeptide chains, the first step in protein N-glycosylation. N-glycosylation occurs cotranslationally and the complex associates with the Sec61 complex at the channel-forming translocon complex that mediates protein translocation across the endoplasmic reticulum (ER). All subunits are required for a maximal enzyme activity. The protein is Dolichyl-diphosphooligosaccharide--protein glycosyltransferase subunit 4 of Drosophila ananassae (Fruit fly).